The primary structure comprises 474 residues: Ribulose bisphosphate carboxylase large chain (474 aa).

Position 2 is an N-acetylproline (proline 2). Lysine 13 carries the N6,N6,N6-trimethyllysine modification. Asparagine 122 and threonine 172 together coordinate substrate. Catalysis depends on lysine 174, which acts as the Proton acceptor. Residue lysine 176 participates in substrate binding. Mg(2+)-binding residues include lysine 200, aspartate 202, and glutamate 203. Residue lysine 200 is modified to N6-carboxylysine. Histidine 293 serves as the catalytic Proton acceptor. Positions 294, 326, and 378 each coordinate substrate.

It belongs to the RuBisCO large chain family. Type I subfamily. As to quaternary structure, heterohexadecamer of 8 large chains and 8 small chains; disulfide-linked. The disulfide link is formed within the large subunit homodimers. Mg(2+) serves as cofactor. Post-translationally, the disulfide bond which can form in the large chain dimeric partners within the hexadecamer appears to be associated with oxidative stress and protein turnover.

It is found in the plastid. It localises to the chloroplast. It catalyses the reaction 2 (2R)-3-phosphoglycerate + 2 H(+) = D-ribulose 1,5-bisphosphate + CO2 + H2O. It carries out the reaction D-ribulose 1,5-bisphosphate + O2 = 2-phosphoglycolate + (2R)-3-phosphoglycerate + 2 H(+). Its function is as follows. RuBisCO catalyzes two reactions: the carboxylation of D-ribulose 1,5-bisphosphate, the primary event in carbon dioxide fixation, as well as the oxidative fragmentation of the pentose substrate in the photorespiration process. Both reactions occur simultaneously and in competition at the same active site. The polypeptide is Ribulose bisphosphate carboxylase large chain (Oltmannsiellopsis viridis (Marine flagellate)).